Consider the following 602-residue polypeptide: Glutamine--fructose-6-phosphate aminotransferase [isomerizing] (602 aa).

Cysteine 2 (nucleophile; for GATase activity) is an active-site residue. One can recognise a Glutamine amidotransferase type-2 domain in the interval 2–219; it reads CGIIGYIGDR…DGEYAILTKD (218 aa). SIS domains follow at residues 280-420 and 453-592; these read VAEE…VLGT and LAET…PDKP. Lysine 597 serves as the catalytic For Fru-6P isomerization activity.

In terms of assembly, homodimer.

The protein resides in the cytoplasm. The catalysed reaction is D-fructose 6-phosphate + L-glutamine = D-glucosamine 6-phosphate + L-glutamate. In terms of biological role, catalyzes the first step in hexosamine metabolism, converting fructose-6P into glucosamine-6P using glutamine as a nitrogen source. This Thermococcus kodakarensis (strain ATCC BAA-918 / JCM 12380 / KOD1) (Pyrococcus kodakaraensis (strain KOD1)) protein is Glutamine--fructose-6-phosphate aminotransferase [isomerizing].